Reading from the N-terminus, the 343-residue chain is tRNA N6-adenosine threonylcarbamoyltransferase (343 aa).

Residues histidine 111 and histidine 115 each contribute to the Fe cation site. Substrate contacts are provided by residues 135 to 139 (VLSGG), aspartate 168, glycine 181, and asparagine 280. A Fe cation-binding site is contributed by aspartate 306.

Belongs to the KAE1 / TsaD family. Fe(2+) serves as cofactor.

The protein resides in the cytoplasm. It carries out the reaction L-threonylcarbamoyladenylate + adenosine(37) in tRNA = N(6)-L-threonylcarbamoyladenosine(37) in tRNA + AMP + H(+). In terms of biological role, required for the formation of a threonylcarbamoyl group on adenosine at position 37 (t(6)A37) in tRNAs that read codons beginning with adenine. Is involved in the transfer of the threonylcarbamoyl moiety of threonylcarbamoyl-AMP (TC-AMP) to the N6 group of A37, together with TsaE and TsaB. TsaD likely plays a direct catalytic role in this reaction. This is tRNA N6-adenosine threonylcarbamoyltransferase from Protochlamydia amoebophila (strain UWE25).